The following is a 108-amino-acid chain: uncharacterized protein (108 aa).

Over residues 1–10 (MSGISLTPVK) the composition is skewed to polar residues. Disordered regions lie at residues 1–63 (MSGI…RPPR) and 83–108 (VLSP…PRTQ). Residues 33–62 (YVDRARPSADAKEHCAASDPEEWHSGDRPP) are compositionally biased toward basic and acidic residues.

This is an uncharacterized protein from Gallid herpesvirus 2 (strain Chicken/Md5/ATCC VR-987) (GaHV-2).